The following is a 300-amino-acid chain: O-methyltransferase phiE (300 aa).

S-adenosyl-L-methionine is bound by residues 130 to 131 (DL) and 157 to 158 (DV).

This sequence belongs to the class I-like SAM-binding methyltransferase superfamily. As to quaternary structure, homodimer.

It catalyses the reaction phomoidride A + S-adenosyl-L-methionine = (-)-phomoidride B + methanol + S-adenosyl-L-homocysteine + H(+). The protein operates within secondary metabolite biosynthesis. Its function is as follows. O-methyltransferase; part of the gene cluster that mediates the biosynthesis of the antihypercholesterolemic agents phomoidrides which are dimeric anhydrides. Within the pathway, phiE catalyzes the acetalization reaction that converts phomoidride A to phomoidride B. The pathway begins with the highly reducing polyketide synthase phiA that catalyzes the formation of a C12-fatty acyl-ACP, starting from one acetate and 5 malonate units. The hydrolase phiM is involved in the release of the C12-fatty acyl chain from phiA. The alkylcitrate synthase (ACS) phiJ and the alkylcitrate dehydratase (ACDH) phiI then give rise to decarboxylated monomeric anhydrides by coupling the C12-fatty acyl chain with oxalacetic acid. The cyclase phiC is responsible for the dimerization of the monomeric anhydrides which leads to the production of prephomoidride that contains the characteristic bicyclo[4.3.1]deca-1,6-diene system of phomoidrides. Iterative oxidation catalyzed by the alpha-ketoglutarate-dependent dioxygenase phiK produced then phomoidride A. Finally, the methyltransferase phiE converts phomoidride A to phomoidride B via an acetalization reaction. The phosphatidylethanolamine-binding protein phiB and phiN are not essential for dimerization and their functions have still to be determined. The chain is O-methyltransferase phiE from Fungal sp. (strain ATCC 74256).